The chain runs to 411 residues: Peptide chain release factor subunit 1 (411 aa).

Belongs to the eukaryotic release factor 1 family. Heterodimer of two subunits, one of which binds GTP.

The protein resides in the cytoplasm. Directs the termination of nascent peptide synthesis (translation) in response to the termination codons UAA, UAG and UGA. This is Peptide chain release factor subunit 1 from Methanosphaera stadtmanae (strain ATCC 43021 / DSM 3091 / JCM 11832 / MCB-3).